A 101-amino-acid polypeptide reads, in one-letter code: Protein S100-A3 (101 aa).

EF-hand domains lie at 12 to 47 (IVCTFQEYAGRCGDKYKICQSELKELLQKELPTWTP) and 50 to 85 (FRECDYNKFMSVLDTNKDCEVDFGEYVRSLASLCLY). Lysine 26 provides a ligand contact to Ca(2+). Cysteine 30 and cysteine 68 are oxidised to a cystine. Position 51 is a citrulline; by PAD3 (arginine 51). The Ca(2+) site is built by aspartate 63, asparagine 65, aspartate 67, glutamate 69, and glutamate 74. The Zn(2+) site is built by cysteine 83, cysteine 86, histidine 87, and cysteine 93.

This sequence belongs to the S-100 family. As to quaternary structure, homodimer and homotetramer for the citrullinated form. More than half of the arginine residues undergo citrullination by PAD1 and PAD2. Arg-51 is specifically citrullinated by PAD3 and promotes tetramerization. As to expression, skin specific, specifically expressed in cuticle of pelage follicle.

The protein resides in the cytoplasm. Binds both calcium and zinc. May be involved in calcium-dependent cuticle cell differentiation, hair shaft and hair cuticular barrier formation. The sequence is that of Protein S100-A3 (S100a3) from Mus musculus (Mouse).